The primary structure comprises 130 residues: Small ribosomal subunit protein uS11 (130 aa).

It belongs to the universal ribosomal protein uS11 family. As to quaternary structure, part of the 30S ribosomal subunit. Interacts with proteins S7 and S18. Binds to IF-3.

Its function is as follows. Located on the platform of the 30S subunit, it bridges several disparate RNA helices of the 16S rRNA. Forms part of the Shine-Dalgarno cleft in the 70S ribosome. In Campylobacter lari (strain RM2100 / D67 / ATCC BAA-1060), this protein is Small ribosomal subunit protein uS11.